A 435-amino-acid chain; its full sequence is Glutamine synthetase (435 aa).

Residues 12–94 form the GS beta-grasp domain; sequence KGVKYFMISY…VAADCIMDDA (83 aa). The 336-residue stretch at 100 to 435 folds into the GS catalytic domain; sequence PRVVLKKLVA…EWEHQTTLDV (336 aa). Mg(2+) is bound by residues E123, E125, E180, and E187. G232 is an L-glutamate binding site. H236 lines the Mg(2+) pocket. An ATP-binding site is contributed by S240. Residues R291 and R315 each contribute to the L-glutamate site. Residues R315 and R320 each contribute to the ATP site. Position 328 (E328) interacts with Mg(2+). Position 330 (R330) interacts with L-glutamate.

It belongs to the glutamine synthetase family. As to quaternary structure, homooctamer. Mg(2+) serves as cofactor.

It carries out the reaction L-glutamate + NH4(+) + ATP = L-glutamine + ADP + phosphate + H(+). Inhibited by methionine sulfoximine, ADP and pyrophosphate, but not by various nitrogen-containing metabolites that inhibit other GS enzymes. In terms of biological role, catalyzes the ATP-dependent biosynthesis of glutamine from glutamate and ammonia. The protein is Glutamine synthetase of Rhizobium meliloti (strain 1021) (Ensifer meliloti).